Here is a 106-residue protein sequence, read N- to C-terminus: ATP-dependent Clp protease adapter protein ClpS (106 aa).

Residues 1–20 (MKVDMSTSVKDDAQLEASRV) form a disordered region.

It belongs to the ClpS family. In terms of assembly, binds to the N-terminal domain of the chaperone ClpA.

Functionally, involved in the modulation of the specificity of the ClpAP-mediated ATP-dependent protein degradation. The polypeptide is ATP-dependent Clp protease adapter protein ClpS (Chromobacterium violaceum (strain ATCC 12472 / DSM 30191 / JCM 1249 / CCUG 213 / NBRC 12614 / NCIMB 9131 / NCTC 9757 / MK)).